The chain runs to 79 residues: uncharacterized protein (79 aa).

The protein belongs to the BolA/IbaG family.

This is an uncharacterized protein from Buchnera aphidicola subsp. Baizongia pistaciae (strain Bp).